The sequence spans 390 residues: MQIHPLITDSATLAALCSRLSRADFIAIDTEFIRENSYWPELCLIQIADDKEAAAIDPLAPGLDMTPLTDLLVNNEDILKVFHAGGQDLEIILHHTGKMPFPLFDTQIAAMALGVGEQVGYSNLVERYLSIKLDKGARFTDWSHRPLDRRQLDYAIADVTHLATLFPMLLKELRDKGRGAWLDQEMERLADPSQYINDPEKSWLRIRMPNRKADILGRLKALAAWREIEAQNRNIPRGRIAKDETLADLAIHPPRRQSDLVKVRGLSGSWGSNDIGQRLMEAIENAEALRPEEIPQRNDRKLCIGKDGAMIADLLKLLLKMRARDAEVAARLIAKSDDIEGIIAGERENNPVLTGWRYDIFGKEAIALIEGKMAFSVQKGKIAMTLIEKE.

One can recognise a 3'-5' exonuclease domain in the interval 7-173 (ITDSATLAAL…TLFPMLLKEL (167 aa)). The region spanning 212–293 (KADILGRLKA…ENAEALRPEE (82 aa)) is the HRDC domain.

The protein belongs to the RNase D family. A divalent metal cation is required as a cofactor.

Its subcellular location is the cytoplasm. It catalyses the reaction Exonucleolytic cleavage that removes extra residues from the 3'-terminus of tRNA to produce 5'-mononucleotides.. Exonuclease involved in the 3' processing of various precursor tRNAs. Initiates hydrolysis at the 3'-terminus of an RNA molecule and releases 5'-mononucleotides. In Zymomonas mobilis subsp. mobilis (strain ATCC 31821 / ZM4 / CP4), this protein is Ribonuclease D.